The sequence spans 1205 residues: Chromosome partition protein Smc (1205 aa).

32–39 (PNGSGKSN) contacts ATP. Coiled-coil stretches lie at residues 169 to 288 (KHRK…SIQH) and 330 to 499 (EELE…GLQR). The SMC hinge domain occupies 514 to 628 (GLFGSIAQLV…VNDLTEAMGL (115 aa)). 3 coiled-coil regions span residues 661 to 771 (LEVT…AQET), 802 to 836 (AVRT…RAQQ), and 979 to 1033 (DRVT…KDLL).

The protein belongs to the SMC family. In terms of assembly, homodimer.

It localises to the cytoplasm. In terms of biological role, required for chromosome condensation and partitioning. This is Chromosome partition protein Smc from Mycobacterium tuberculosis (strain ATCC 25618 / H37Rv).